The primary structure comprises 671 residues: Diguanylate cyclase DgcP (671 aa).

Disordered regions lie at residues 204 to 223 (AAPS…PPQP) and 278 to 298 (EAGA…PEAP). Aspartate 549 contacts Mg(2+). Substrate is bound by residues asparagine 557, histidine 562, and aspartate 566. Mg(2+) is bound at residue glutamate 592. Glutamate 592 is a catalytic residue.

In terms of assembly, homodimer. Mg(2+) is required as a cofactor.

The protein localises to the cell inner membrane. It carries out the reaction 2 GTP = 3',3'-c-di-GMP + 2 diphosphate. Its pathway is purine metabolism; 3',5'-cyclic di-GMP biosynthesis. In terms of biological role, catalyzes the synthesis of cyclic-di-GMP (c-di-GMP) via the condensation of 2 GTP molecules. Cyclic-di-GMP is a second messenger which controls cell surface-associated traits in bacteria. Localizes at the cell poles through interaction with FimV where it increases the local pools of c-di-GMP. The chain is Diguanylate cyclase DgcP (dgcP) from Pseudomonas aeruginosa (strain ATCC 15692 / DSM 22644 / CIP 104116 / JCM 14847 / LMG 12228 / 1C / PRS 101 / PAO1).